Reading from the N-terminus, the 159-residue chain is Bacterial non-heme ferritin (159 aa).

In terms of domain architecture, Ferritin-like diiron spans 1–145 (MISEKLQNAI…GIVDKIKRAG (145 aa)). Glu-17, Glu-50, His-53, Glu-94, and Gln-127 together coordinate Fe cation.

This sequence belongs to the ferritin family. Prokaryotic subfamily. Homooligomer of 24 subunits that assemble into a spherical protein shell (12 +/- 1 nM diameter) that can sequester at least 2000 iron atoms.

It carries out the reaction 4 Fe(2+) + O2 + 6 H2O = 4 iron(III) oxide-hydroxide + 12 H(+). Functionally, may alleviate iron toxicity in the presence of oxygen. The chain is Bacterial non-heme ferritin (ftnA) from Bacteroides fragilis (strain 638R).